Here is a 307-residue protein sequence, read N- to C-terminus: Tyrosine recombinase XerC (307 aa).

Residues 6-89 enclose the Core-binding (CB) domain; that stretch reads HNTLQTVNTF…TLRTFFRYLM (84 aa). Residues 110 to 293 enclose the Tyr recombinase domain; that stretch reads RLPKALDVDQ…DFQHLAQVYD (184 aa). Active-site residues include Arg151, Lys175, His245, Arg248, and His271. Tyr280 (O-(3'-phospho-DNA)-tyrosine intermediate) is an active-site residue.

It belongs to the 'phage' integrase family. XerC subfamily. As to quaternary structure, forms a cyclic heterotetrameric complex composed of two molecules of XerC and two molecules of XerD.

The protein resides in the cytoplasm. Site-specific tyrosine recombinase, which acts by catalyzing the cutting and rejoining of the recombining DNA molecules. The XerC-XerD complex is essential to convert dimers of the bacterial chromosome into monomers to permit their segregation at cell division. It also contributes to the segregational stability of plasmids. This chain is Tyrosine recombinase XerC, found in Alcanivorax borkumensis (strain ATCC 700651 / DSM 11573 / NCIMB 13689 / SK2).